The chain runs to 94 residues: Co-chaperonin GroES (94 aa).

The protein belongs to the GroES chaperonin family. In terms of assembly, heptamer of 7 subunits arranged in a ring. Interacts with the chaperonin GroEL.

The protein localises to the cytoplasm. Functionally, together with the chaperonin GroEL, plays an essential role in assisting protein folding. The GroEL-GroES system forms a nano-cage that allows encapsulation of the non-native substrate proteins and provides a physical environment optimized to promote and accelerate protein folding. GroES binds to the apical surface of the GroEL ring, thereby capping the opening of the GroEL channel. This is Co-chaperonin GroES from Listeria monocytogenes serotype 4b (strain CLIP80459).